A 590-amino-acid chain; its full sequence is Keratin, type II cytoskeletal 5 (590 aa).

The segment covering 1 to 18 has biased composition (low complexity); the sequence is MSRQSSVSFRSGGSRSFS. A disordered region spans residues 1–20; the sequence is MSRQSSVSFRSGGSRSFSTA. The tract at residues 1 to 167 is head; sequence MSRQSSVSFR…DPSIQRVRTE (167 aa). 4 positions are modified to phosphoserine: Ser5, Ser8, Ser16, and Ser21. Thr24 carries the post-translational modification Phosphothreonine; by CDK1. Ser26, Ser36, Ser50, Ser64, Ser71, Ser75, and Ser82 each carry phosphoserine. Thr151 is modified (phosphothreonine; by CDK1). Positions 168 to 203 are coil 1A; that stretch reads EREQIKTLNNKFASFIDKVRFLEQQNKVLDTKWTLL. One can recognise an IF rod domain in the interval 168–481; that stretch reads EREQIKTLNN…KLLEGEECRL (314 aa). The linker 1 stretch occupies residues 204–222; sequence QEQGTKTVRQNLEPLFEQY. The segment at 223 to 315 is coil 1B; the sequence is INNLRRQLDS…FFDAELSQMQ (93 aa). The linker 12 stretch occupies residues 316-338; it reads THVSDTSVVLSMDNNRNLDLDSI. The interval 339–477 is coil 2; it reads IAEVKAQYEE…ATYRKLLEGE (139 aa). The segment at 478–590 is tail; that stretch reads ECRLSGEGVG…TSSSRKSFKS (113 aa). The segment at 566–590 is disordered; it reads GSGGGSSSSVKFVSTTSSSRKSFKS. Residues 572–590 are compositionally biased toward low complexity; it reads SSSVKFVSTTSSSRKSFKS.

Belongs to the intermediate filament family. Heterodimer of a type I and a type II keratin. Heterodimer with type I keratin KRT25 leading to the formation of keratin intermediate filament (KIF) network. Forms a heterodimer (via 2B domains) with KRT14 (via 2B domains). Interacts with PLEC isoform 1C, when in a heterodimer with KRT14. Interacts with TCHP. Interacts with EPPK1. Interacts with AMELX. Interacts with PKP1 (via N-terminus) and PKP2. Post-translationally, phosphorylated by CDK1, AURKB and Rho-kinase, phosphorylation is regulated by the cell cycle. Thr-24 phosphorylation, mediated by CDK1, peaks during prometaphase or metaphase cells with phosphorylated filamentous structures evident throughout the cytoplasm during early mitosis. CDK1 phosphorylates Thr-24 in mitotic cells at the site of injury. O-glycosylated. Expressed in corneal epithelium (at protein level). Expressed in keratinocytes (at protein level).

The protein resides in the cytoplasm. Required for the formation of keratin intermediate filaments in the basal epidermis and maintenance of the skin barrier in response to mechanical stress. Regulates the recruitment of Langerhans cells to the epidermis, potentially by modulation of the abundance of macrophage chemotactic cytokines, macrophage inflammatory cytokines and CTNND1 localization in keratinocytes. This is Keratin, type II cytoskeletal 5 (KRT5) from Homo sapiens (Human).